The primary structure comprises 176 residues: MKSLLLTILLLGLVAVLKAQEAPPDDLVDYSGIWYAKAMVHNGTLPSHKIPSIVFPVRIIALEEGDLETTVVFWNNGHCREFKFVMKKTEEPGKYTAFHNTKVIHVEKTSVNEHYIFYCEGRHNGTSSFGMGKLMGRDSGENPEAMEEFKNFIKRMNLRLENMFVPEIGDKCVESD.

The signal sequence occupies residues 1–19; sequence MKSLLLTILLLGLVAVLKA. N-linked (GlcNAc...) asparagine glycosylation is found at Asn42 and Asn124. Residues Cys79 and Cys172 are joined by a disulfide bond.

The protein belongs to the calycin superfamily. Lipocalin family. In terms of tissue distribution, expressed in the liver (at protein level). Expressed in epididymis.

The protein resides in the secreted. Involved in the regulation of systematic glucose homeostasis and insulin sensitivity. Involved in the regulation of liver lipid levels by positive regulation of hepatic lipogenesis and negative regulation of fatty acid beta-oxidation; via downstream transcriptional regulation of CPT1A and hepatic lipogenic program gene expression. May regulate hepatic lipogenesis and fatty acid beta-oxidation in an autocrine or paracrine manner. The chain is Odorant-binding protein 2a (Obp2a) from Mus musculus (Mouse).